The chain runs to 744 residues: Cytoskeleton-associated protein 2-like (744 aa).

Disordered regions lie at residues 35–56, 76–169, 182–216, 317–337, and 428–452; these read YLKA…GPKK, LQSR…THVE, KENL…SSLA, TVTE…VLQG, and NKTA…GAQT. 3 stretches are compositionally biased toward polar residues: residues 76–86, 102–129, and 137–154; these read LQSRPANITRS, SESV…STDG, and GSLN…VTDQ. K195 is covalently cross-linked (Glycyl lysine isopeptide (Lys-Gly) (interchain with G-Cter in SUMO1); alternate). Residue K195 forms a Glycyl lysine isopeptide (Lys-Gly) (interchain with G-Cter in SUMO2); alternate linkage. Residues 199–216 are compositionally biased toward polar residues; that stretch reads ESWTINKPQTNQTKSSLA. S744 is modified (phosphoserine).

It belongs to the CKAP2 family. In terms of processing, ubiquitinated by the anaphase promoting complex/cyclosome (APC/C).

It is found in the cytoplasm. The protein localises to the cytoskeleton. Its subcellular location is the spindle pole. In terms of biological role, microtubule-associated protein required for mitotic spindle formation and cell-cycle progression in neural progenitor cells. The protein is Cytoskeleton-associated protein 2-like (CKAP2L) of Bos taurus (Bovine).